The primary structure comprises 115 residues: Superoxide reductase (115 aa).

Fe cation-binding residues include Glu14, His16, His41, His47, Cys102, and His105.

Belongs to the desulfoferrodoxin family. Homotetramer. Fe cation serves as cofactor.

The catalysed reaction is reduced [rubredoxin] + superoxide + 2 H(+) = oxidized [rubredoxin] + H2O2. Its function is as follows. Uses electrons from reduced NADP, by way of rubredoxin and an oxidoreductase, to catalyze the reduction of superoxide to hydrogen peroxide. In Thermococcus kodakarensis (strain ATCC BAA-918 / JCM 12380 / KOD1) (Pyrococcus kodakaraensis (strain KOD1)), this protein is Superoxide reductase (sorA).